A 410-amino-acid chain; its full sequence is Thyroid hormone receptor alpha (410 aa).

Positions 1-32 (MEQKPSKVECGSDPEESSTRSPDGKRKRKNGQ) are disordered. Residues 1-52 (MEQKPSKVECGSDPEESSTRSPDGKRKRKNGQCSLKTSMSGYIPSYLDKDEQ) form a modulating region. Cys-53, Cys-56, Cys-70, Cys-73, Cys-91, Cys-97, Cys-107, and Cys-110 together coordinate Zn(2+). NR C4-type zinc fingers lie at residues 53 to 73 (CVVC…CEGC) and 91 to 115 (CKYD…FKKC). Positions 53-127 (CVVCGDKATG…VGMAMDLVLD (75 aa)) form a DNA-binding region, nuclear receptor. The NR LBD domain maps to 163–407 (EEWDLIHVAT…PPLFLEVFED (245 aa)). 2 residues coordinate 3,3',5-triiodo-L-thyronine: Arg-228 and Ser-277.

It belongs to the nuclear hormone receptor family. NR1 subfamily. Binds DNA as a dimer; homodimer and heterodimer with RXRB. Interacts with NCOA3 and NCOA6 coactivators, leading to a strong increase of transcription of target genes. Probably interacts with SFPQ. Interacts with C1D. Interacts with AKAP13. Interacts with TP53INP2. Interacts with PER2. Interacts with TACC1. The interaction with isoform alpha-1, but not alpha-2, is decreased in the presence of thyroid hormone T3.

Its subcellular location is the nucleus. It is found in the cytoplasm. In terms of biological role, nuclear hormone receptor that can act as a repressor or activator of transcription. High affinity receptor for thyroid hormones, including triiodothyronine and thyroxine. The protein is Thyroid hormone receptor alpha (THRA) of Ovis aries (Sheep).